A 194-amino-acid polypeptide reads, in one-letter code: FMN-dependent NADH:quinone oxidoreductase (194 aa).

FMN contacts are provided by residues S10 and 90-93 (MYNL).

This sequence belongs to the azoreductase type 1 family. As to quaternary structure, homodimer. FMN is required as a cofactor.

The catalysed reaction is 2 a quinone + NADH + H(+) = 2 a 1,4-benzosemiquinone + NAD(+). It catalyses the reaction N,N-dimethyl-1,4-phenylenediamine + anthranilate + 2 NAD(+) = 2-(4-dimethylaminophenyl)diazenylbenzoate + 2 NADH + 2 H(+). Quinone reductase that provides resistance to thiol-specific stress caused by electrophilic quinones. Its function is as follows. Also exhibits azoreductase activity. Catalyzes the reductive cleavage of the azo bond in aromatic azo compounds to the corresponding amines. This is FMN-dependent NADH:quinone oxidoreductase from Haemophilus influenzae (strain 86-028NP).